Consider the following 1191-residue polypeptide: Solute carrier family 12 member 2 (1191 aa).

Positions 1–166 (MEPAFPASSA…MSEGSLHSSG (166 aa)) are disordered. At 1-258 (MEPAFPASSA…ADNKGVVKFG (258 aa)) the chain is on the cytoplasmic side. 4 stretches are compositionally biased toward low complexity: residues 13-25 (QSQS…AGQQ), 59-69 (KGQTAAQPAAA), 80-99 (AAAP…AAAA), and 131-141 (SASSAHGGHQP). Positions 142 to 155 (PSESMNGYPQNGDT) are enriched in polar residues. 3 positions are modified to phosphothreonine; by OXSR1 and STK39: Thr175, Thr179, and Thr184. Phosphothreonine occurs at positions 189 and 202. The chain crosses the membrane as a discontinuously helical span at residues 259-288 (WIKGVLVRCMLNIWGVMLFIRLSWIVGHAG). Leu269 is a binding site for Na(+). K(+) contacts are provided by Asn270 and Ile271. Residue Trp272 participates in Na(+) binding. Chloride contacts are provided by Gly273, Val274, and Met275. A helical membrane pass occupies residues 289–308 (IGLALLVIGTATVVTTITGL). Over 309–339 (STSAITTNGFVRGGGAYYLISRSLGPEFGGA) the chain is Cytoplasmic. The chain crosses the membrane as a helical span at residues 340–367 (IGLIFAFANAVAVAMYVVGFAETVRDLL). Phe344 contacts chloride. Tyr355 serves as a coordination point for K(+). The Extracellular portion of the chain corresponds to 368–377 (VEHNALMIDE). Residues 378–401 (MSDIRIIGSVTIVVLFGISVAGME) form a helical membrane-spanning segment. At 402-404 (WEA) the chain is on the cytoplasmic side. A helical transmembrane segment spans residues 405-426 (KAQIVLLGILLLAIVNFTVGTF). Residues 427-458 (IPANDKRAKGFFNYRGEIFSENFVPDFRDGED) lie on the Extracellular side of the membrane. Residues 459 to 476 (FFSVFAIFFPAATGILAG) form a discontinuously helical membrane-spanning segment. Positions 468, 469, and 471 each coordinate K(+). Chloride is bound by residues Pro468 and Ala469. Chloride is bound by residues Gly472 and Ile473. Topologically, residues 477–491 (ANISGDLADPQLAIP) are cytoplasmic. The chain crosses the membrane as a helical span at residues 492–513 (KGTLLAILITTIVYAGAAVSVG). Residues 514–571 (SCIVREATGNLTDAIIPGTVTNCTNVACKLGFNFSSCATNKCSYGLMNDFQVMSLVSG) lie on the Extracellular side of the membrane. Residues Asn523 and Asn535 are each glycosylated (N-linked (GlcNAc...) asparagine). A disulfide bridge links Cys536 with Cys541. A glycan (N-linked (GlcNAc...) asparagine) is linked at Asn546. A disulfide bridge links Cys550 with Cys555. Residues 572–596 (FGPLITAGIFSATLSSALASLVSAP) traverse the membrane as a helical segment. Ala583, Ser586, and Ser587 together coordinate Na(+). The Cytoplasmic segment spans residues 597-624 (KIFQALCKDNIYPGLHVFSVGYGKNNEP). The next 2 helical transmembrane spans lie at 625–645 (LRGY…AELN) and 646–664 (VIAP…LINF). 2 residues coordinate chloride: Phe655 and Tyr659. At 665 to 687 (SVFHASLAKSPGWRPAFRFYNMW) the chain is on the cytoplasmic side. 2 helical membrane passes run 688 to 705 (ISLI…VINW) and 706 to 718 (WAAL…VLAL). At 719–1191 (YIYVTYKKPD…NHQSVLTFYS (473 aa)) the chain is on the cytoplasmic side. The interval 734–751 (STQALTYLNALQHAIRLT) is scissor helix. The interval 929-972 (HSDADSSKPSSKSVSETNSPAVCQDQKDEEDDGKASTQPLLKKE) is disordered. A compositionally biased stretch (low complexity) spans 935–948 (SKPSSKSVSETNSP). Thr1114 bears the Phosphothreonine mark.

Belongs to the SLC12A transporter family. In terms of assembly, homodimer. In terms of processing, phosphorylated at Thr-175, Thr-179 and Thr-184 by OXSR1/OSR1 and STK39/SPAK downstream of WNK kinases (WNK1, WNK2, WNK3 or WNK4), promoting its activity. Strongly expressed in rectal gland, brain, gill and intestine. Also detected at lower levels in heart, kidney, and testis.

The protein localises to the basolateral cell membrane. The enzyme catalyses K(+)(out) + 2 chloride(out) + Na(+)(out) = K(+)(in) + 2 chloride(in) + Na(+)(in). With respect to regulation, activated following phosphorylation by OXSR1/OSR1 and STK39/SPAK. Inhibited by bumetanide. Its function is as follows. Cation-chloride cotransporter which mediates the electroneutral transport of chloride, potassium and/or sodium ions across the membrane. Plays a vital role in the regulation of ionic balance and cell volume. The sequence is that of Solute carrier family 12 member 2 (SLC12A2) from Squalus acanthias (Spiny dogfish).